Here is a 328-residue protein sequence, read N- to C-terminus: uncharacterized protein (328 aa).

The region spanning 3 to 126 (RVKIGEFKFG…EVIPQVLCTG (124 aa)) is the Bro-N domain.

This is an uncharacterized protein from Autographa californica nuclear polyhedrosis virus (AcMNPV).